Reading from the N-terminus, the 289-residue chain is 4-diphosphocytidyl-2-C-methyl-D-erythritol kinase (289 aa).

The active site involves Lys-10. ATP is bound at residue 99-109; sequence PMGGGLGGGSS. The active site involves Asp-141.

The protein belongs to the GHMP kinase family. IspE subfamily. In terms of assembly, homodimer.

The enzyme catalyses 4-CDP-2-C-methyl-D-erythritol + ATP = 4-CDP-2-C-methyl-D-erythritol 2-phosphate + ADP + H(+). It participates in isoprenoid biosynthesis; isopentenyl diphosphate biosynthesis via DXP pathway; isopentenyl diphosphate from 1-deoxy-D-xylulose 5-phosphate: step 3/6. Catalyzes the phosphorylation of the position 2 hydroxy group of 4-diphosphocytidyl-2C-methyl-D-erythritol. This chain is 4-diphosphocytidyl-2-C-methyl-D-erythritol kinase, found in Enterobacter sp. (strain 638).